The chain runs to 126 residues: uncharacterized protein (126 aa).

A helical membrane pass occupies residues 48 to 68 (ILCMFPWQCVVYVFSNFVWLV).

Its subcellular location is the membrane. This is an uncharacterized protein from Homo sapiens (Human).